The following is a 501-amino-acid chain: Dihydrolipoyl dehydrogenase, mitochondrial (501 aa).

The transit peptide at 1–31 (MAMANLARRKGYSLLSSETLRYSFSLRSRAF) directs the protein to the mitochondrion. FAD-binding positions include 67-76 (EKRGALGGTC), Lys85, Gly149, and 178-180 (TGS). Cysteines 76 and 81 form a disulfide. NAD(+)-binding positions include 215 to 222 (GAGYIGLE), Glu238, Val272, and Gly307. Residues Asp348 and 354-357 (MLAH) contribute to the FAD site. The active-site Proton acceptor is the His480.

Belongs to the class-I pyridine nucleotide-disulfide oxidoreductase family. As to quaternary structure, homodimer. It depends on FAD as a cofactor.

It is found in the mitochondrion matrix. It carries out the reaction N(6)-[(R)-dihydrolipoyl]-L-lysyl-[protein] + NAD(+) = N(6)-[(R)-lipoyl]-L-lysyl-[protein] + NADH + H(+). In terms of biological role, lipoamide dehydrogenase is a component of the glycine cleavage system as well as of the alpha-ketoacid dehydrogenase complexes. The pyruvate dehydrogenase complex contains multiple copies of three enzymatic components: pyruvate dehydrogenase (E1), dihydrolipoamide acetyltransferase (E2) and lipoamide dehydrogenase (E3). The chain is Dihydrolipoyl dehydrogenase, mitochondrial (LPD) from Pisum sativum (Garden pea).